Reading from the N-terminus, the 1893-residue chain is Transcription initiation factor TFIID subunit 1 (1893 aa).

The region spanning 1–435 (MGPGCDLLLR…VTQLHWEDDI (435 aa)) is the Protein kinase 1 domain. Ser137 is subject to Phosphoserine; by autocatalysis. 2 disordered regions span residues 155 to 184 (LMPP…NGEG) and 197 to 224 (ASEK…AESE). Residues 156-165 (MPPPPPPPGP) show a composition bias toward pro residues. Residues 197 to 208 (ASEKVDFSSSSD) show a composition bias toward low complexity. Ser328 carries the post-translational modification Phosphoserine; by autocatalysis. The interval 534–557 (IPDEKEEATSNSPSKESKKESSLK) is disordered. The tract at residues 538–997 (KEEATSNSPS…KIPNKPTQQK (460 aa)) is histone acetyltransferase (HAT). An N6-acetyllysine modification is found at Lys565. Glycyl lysine isopeptide (Lys-Gly) (interchain with G-Cter in SUMO2) cross-links involve residues Lys570 and Lys583. 4 disordered regions span residues 990-1009 (PNKP…KKTV), 1128-1148 (MLQN…QERK), 1158-1177 (GSAA…VTSL), and 1254-1278 (RLKR…MKER). 2 stretches are compositionally biased toward basic and acidic residues: residues 995 to 1004 (QQKDDKEPQP) and 1139 to 1148 (SREREEQERK). The segment at residues 1216–1294 (VRIRTTKDEE…CGACGAIGHM (79 aa)) is a DNA-binding region (HMG box; involved in promoter binding). The span at 1254–1270 (RLKRNQEKEKLKGPPEK) shows a compositional bias: basic and acidic residues. The interval 1363–1650 (VLKFPKQQLP…TAKEAALEEA (288 aa)) is interaction with ASF1A and ASF1B. Positions 1372-1379 (PPKKKRRV) match the Nuclear localization signal motif. Bromo domains follow at residues 1397 to 1505 (RRRT…LKEK) and 1519 to 1628 (LLDD…LTEY). Residues 1446 to 1893 (MDLQTLRENV…AGDSDLDSDE (448 aa)) enclose the Protein kinase 2 domain. The tract at residues 1651 to 1676 (ELESLDPMTPGPYTPQPPDLYDTNTS) is disordered. The segment covering 1659–1668 (TPGPYTPQPP) has biased composition (pro residues). A phosphoserine mark is found at Ser1690, Ser1693, Ala1718, Glu1721, and Gly1723. A disordered region spans residues 1696–1893 (DIPSATPEKQ…AGDSDLDSDE (198 aa)). 2 stretches are compositionally biased toward acidic residues: residues 1709–1723 (EGED…EEEG) and 1741–1756 (EGED…EEGD). 3 positions are modified to phosphoserine: Ser1799, Ser1802, and Ser1820. The segment covering 1830 to 1840 (KSNTQDTSFSS) has biased composition (polar residues). Residues 1846–1857 (VSEEEEDEEEEE) show a composition bias toward acidic residues. Ser1847 carries the phosphoserine modification. Over residues 1860–1869 (SGPSVLSQVH) the composition is skewed to polar residues.

The protein belongs to the TAF1 family. In terms of assembly, component of the TFIID basal transcription factor complex, composed of TATA-box-binding protein TBP, and a number of TBP-associated factors (TAFs), including TAF1, TAF2, TAF3, TAF4, TAF5, TAF6, TAF7, TAF8, TAF9, TAF10, TAF11, TAF12 and TAF13. Interacts with TAF7; the interaction is direct. TAF1, when part of the TFIID complex, interacts with C-terminus of TP53. Part of a TFIID-containing RNA polymerase II pre-initiation complex that is composed of TBP and at least GTF2A1, GTF2A2, GTF2E1, GTF2E2, GTF2F1, GTF2H2, GTF2H3, GTF2H4, GTF2H5, GTF2B, TCEA1, ERCC2, ERCC3, TAF1, TAF2, TAF3, TAF4, TAF5, TAF6, TAF7, TAF8, TAF9, TAF10, TAF11, TAF12 and TAF13. Component of some MLL1/MLL complex, at least composed of the core components KMT2A/MLL1, ASH2L, HCFC1/HCF1, WDR5 and RBBP5, as well as the facultative components BACC1, CHD8, E2F6, HSP70, INO80C, KANSL1, LAS1L, MAX, MCRS1, MGA, KAT8/MOF, PELP1, PHF20, PRP31, RING2, RUVB1/TIP49A, RUVB2/TIP49B, SENP3, TAF1, TAF4, TAF6, TAF7, TAF9 and TEX10. RB1 interacts with the N-terminal domain of TAF1. Interacts with ASF1A and ASF1B. Interacts (via bromo domains) with acetylated lysine residues on the N-terminus of histone H1.4, H2A, H2B, H3 and H4 (in vitro). As to quaternary structure, (Microbial infection) Interacts with SV40 Large T antigen. (Microbial infection) Interacts with herpes simplex virus 1 ICP4. It depends on Mg(2+) as a cofactor. In terms of processing, phosphorylated by casein kinase II in vitro.

The protein localises to the nucleus. The catalysed reaction is L-seryl-[protein] + ATP = O-phospho-L-seryl-[protein] + ADP + H(+). It catalyses the reaction L-threonyl-[protein] + ATP = O-phospho-L-threonyl-[protein] + ADP + H(+). The enzyme catalyses L-lysyl-[protein] + acetyl-CoA = N(6)-acetyl-L-lysyl-[protein] + CoA + H(+). Its activity is regulated as follows. Autophosphorylates on Ser residues. Inhibited by retinoblastoma tumor suppressor protein, RB1. Binding to TAF7 or CIITA inhibits the histone acetyltransferase activity. The TFIID basal transcription factor complex plays a major role in the initiation of RNA polymerase II (Pol II)-dependent transcription. TFIID recognizes and binds promoters with or without a TATA box via its subunit TBP, a TATA-box-binding protein, and promotes assembly of the pre-initiation complex (PIC). The TFIID complex consists of TBP and TBP-associated factors (TAFs), including TAF1, TAF2, TAF3, TAF4, TAF5, TAF6, TAF7, TAF8, TAF9, TAF10, TAF11, TAF12 and TAF13. TAF1 is the largest component and core scaffold of the TFIID complex, involved in nucleating complex assembly. TAF1 forms a promoter DNA binding subcomplex of TFIID, together with TAF7 and TAF2. Contains novel N- and C-terminal Ser/Thr kinase domains which can autophosphorylate or transphosphorylate other transcription factors. Phosphorylates TP53 on 'Thr-55' which leads to MDM2-mediated degradation of TP53. Phosphorylates GTF2A1 and GTF2F1 on Ser residues. Possesses DNA-binding activity. Essential for progression of the G1 phase of the cell cycle. Exhibits histone acetyltransferase activity towards histones H3 and H4. The sequence is that of Transcription initiation factor TFIID subunit 1 from Homo sapiens (Human).